The primary structure comprises 527 residues: Catalase (527 aa).

The span at 1–22 (MADSRDPASDQMKQWKEQRAPQ) shows a compositional bias: basic and acidic residues. Residues 1 to 34 (MADSRDPASDQMKQWKEQRAPQKPDVLTTGGGNP) are disordered. Ala2 bears the N-acetylalanine mark. Phosphoserine is present on Ser9. The residue at position 13 (Lys13) is an N6-succinyllysine. Active-site residues include His75 and Asn148. His194, Ser201, Arg203, and Asn213 together coordinate NADP(+). Lys221 carries the N6-succinyllysine modification. Lys233 carries the N6-acetyllysine modification. Residues Lys237, Trp303, His305, and Lys306 each contribute to the NADP(+) site. At Lys306 the chain carries N6-acetyllysine; alternate. Lys306 is modified (N6-succinyllysine; alternate). A heme-binding site is contributed by Tyr358. 2 positions are modified to phosphoserine: Ser417 and Ser434. N6-acetyllysine; alternate occurs at positions 449 and 480. An N6-succinyllysine; alternate mark is found at Lys449 and Lys480. At Thr511 the chain carries Phosphothreonine. Position 517 is a phosphoserine (Ser517). Lys522 is subject to N6-succinyllysine. The Microbody targeting signal; atypical motif lies at 524 to 527 (KANL).

The protein belongs to the catalase family. As to quaternary structure, homotetramer. Interacts (via microbody targeting signal) with PEX5, monomeric form interacts with PEX5, leading to its translocation into peroxisomes. Requires heme as cofactor. NADP(+) is required as a cofactor. Expressed in renal proximal tubules (at protein level).

Its subcellular location is the peroxisome matrix. It catalyses the reaction 2 H2O2 = O2 + 2 H2O. In terms of biological role, catalyzes the degradation of hydrogen peroxide (H(2)O(2)) generated by peroxisomal oxidases to water and oxygen, thereby protecting cells from the toxic effects of hydrogen peroxide. Promotes growth of cells including T-cells, B-cells, myeloid leukemia cells, melanoma cells, mastocytoma cells and normal and transformed fibroblast cells. The sequence is that of Catalase (Cat) from Rattus norvegicus (Rat).